A 270-amino-acid chain; its full sequence is Formamidopyrimidine-DNA glycosylase (270 aa).

Pro2 (schiff-base intermediate with DNA) is an active-site residue. Residue Glu3 is the Proton donor of the active site. Lys56 acts as the Proton donor; for beta-elimination activity in catalysis. DNA is bound by residues His89, Arg107, and Arg151. An FPG-type zinc finger spans residues 236-270 (TVYGRAGEPCRVCATPIRLLRQGQRSTYYCPNCQK). Catalysis depends on Arg260, which acts as the Proton donor; for delta-elimination activity.

Belongs to the FPG family. As to quaternary structure, monomer. Requires Zn(2+) as cofactor.

It carries out the reaction Hydrolysis of DNA containing ring-opened 7-methylguanine residues, releasing 2,6-diamino-4-hydroxy-5-(N-methyl)formamidopyrimidine.. It catalyses the reaction 2'-deoxyribonucleotide-(2'-deoxyribose 5'-phosphate)-2'-deoxyribonucleotide-DNA = a 3'-end 2'-deoxyribonucleotide-(2,3-dehydro-2,3-deoxyribose 5'-phosphate)-DNA + a 5'-end 5'-phospho-2'-deoxyribonucleoside-DNA + H(+). Its function is as follows. Involved in base excision repair of DNA damaged by oxidation or by mutagenic agents. Acts as a DNA glycosylase that recognizes and removes damaged bases. Has a preference for oxidized purines, such as 7,8-dihydro-8-oxoguanine (8-oxoG). Has AP (apurinic/apyrimidinic) lyase activity and introduces nicks in the DNA strand. Cleaves the DNA backbone by beta-delta elimination to generate a single-strand break at the site of the removed base with both 3'- and 5'-phosphates. The sequence is that of Formamidopyrimidine-DNA glycosylase from Variovorax paradoxus (strain S110).